The chain runs to 101 residues: Small ribosomal subunit protein uS17 (101 aa).

It belongs to the universal ribosomal protein uS17 family. In terms of assembly, part of the 30S ribosomal subunit.

Functionally, one of the primary rRNA binding proteins, it binds specifically to the 5'-end of 16S ribosomal RNA. This is Small ribosomal subunit protein uS17 from Leifsonia xyli subsp. xyli (strain CTCB07).